The chain runs to 258 residues: Tryptophan synthase alpha chain (258 aa).

Active-site proton acceptor residues include glutamate 47 and aspartate 58.

It belongs to the TrpA family. Tetramer of two alpha and two beta chains.

It catalyses the reaction (1S,2R)-1-C-(indol-3-yl)glycerol 3-phosphate + L-serine = D-glyceraldehyde 3-phosphate + L-tryptophan + H2O. It functions in the pathway amino-acid biosynthesis; L-tryptophan biosynthesis; L-tryptophan from chorismate: step 5/5. In terms of biological role, the alpha subunit is responsible for the aldol cleavage of indoleglycerol phosphate to indole and glyceraldehyde 3-phosphate. In Bacillus cereus (strain AH820), this protein is Tryptophan synthase alpha chain.